The primary structure comprises 443 residues: FAD-dependent monooxygenase orf3 (443 aa).

The helical transmembrane segment at 5-25 (SIEVAIIGAGITGITLALGLL) threads the bilayer. Glu35 and Gly48 together coordinate FAD. N-linked (GlcNAc...) asparagine glycosylation is found at Asn75 and Asn87. FAD is bound at residue Arg116. The active site involves Arg199. FAD-binding residues include Asp315 and Ala328.

This sequence belongs to the paxM FAD-dependent monooxygenase family. FAD is required as a cofactor.

It localises to the membrane. It functions in the pathway secondary metabolite biosynthesis. In terms of biological role, FAD-dependent monooxygenase; part of the gene cluster that mediates the biosynthesis of nigerpyrone and its derivatives carbonarone A and pestalamide A. The biosynthesis pathway begins with the polyketide assembly by epaA to form phenylacetyl triketide precursor from successive condensation of two malonyl-CoA, presumably with one phenylacetyl-CoA starter unit produced by the phenylacetyl-CoA ligase epaB. For the nigerpyrone biosynthesis, the reactive polyketide chain is released as an aldehyde through the R-domain. A nonenzymatic cyclization and dehydration may create nigerpyrone. For the biosynthesis of carbonarone A and pestalamide A, an extra methyl group is added through the C-methyltransferase domain. Several further steps involving the dehydrogenase orf1, the cytochrome P450 monooxygenase orf2 and the FAD-dependent monooxygenase orf3 are required to form a carbonarone A precursor which is converted to carbonarone A via cyclization. The O-acetyltransferase epaC could catalyze the transfer of 2-methylsuccinyl-CoA, a common intermediate in the ethylmalonyl-CoA pathway, to generate the final product pestalamide A. The polypeptide is FAD-dependent monooxygenase orf3 (Aspergillus niger (strain ATCC MYA-4892 / CBS 513.88 / FGSC A1513)).